The following is a 311-amino-acid chain: Malate dehydrogenase (311 aa).

NAD(+)-binding positions include 7 to 13 and aspartate 34; that span reads GAAGGIG. Arginine 81 and arginine 87 together coordinate substrate. Residues asparagine 94 and 117–119 contribute to the NAD(+) site; that span reads ITN. Substrate is bound by residues asparagine 119 and arginine 153. Histidine 177 (proton acceptor) is an active-site residue. Methionine 227 contacts NAD(+).

The protein belongs to the LDH/MDH superfamily. MDH type 1 family. In terms of assembly, homodimer.

It carries out the reaction (S)-malate + NAD(+) = oxaloacetate + NADH + H(+). Its function is as follows. Catalyzes the reversible oxidation of malate to oxaloacetate. The polypeptide is Malate dehydrogenase (Shewanella putrefaciens (strain CN-32 / ATCC BAA-453)).